The primary structure comprises 214 residues: MERRELTYKICLIGDGGVGKTTYINRVLDGRFEKNYNATVGAVNHPVTFLDDQGNVIKFNVWDTAGQEKKAVLKDVYYIGASGAIFFFDVTSRITCQNLARWVKEFQAVVGNEAPIVVCANKIDIKNRQKISKKLVMEVLKGKNYEYFEISAKTAHNFGLPFLHLARIFTGRPDLIFVSNVNLEPTEVNYDYHSPEESKYIDYMEQASKMAPEE.

One can recognise a Small GTPase Ran-type domain in the interval 4 to 172 (RELTYKICLI…LHLARIFTGR (169 aa)). Residue 17-22 (GVGKTT) participates in GTP binding. Residues 34 to 42 (KNYNATVGA) form a switch-I region. Residues Gly-66, 121 to 124 (NKID), and 151 to 153 (SAK) each bind GTP. The switch-II stretch occupies residues 66 to 82 (GQEKKAVLKDVYYIGAS).

Belongs to the small GTPase superfamily. Ran family. As to quaternary structure, found in a nuclear export complex with RanGTP, exportin and pre-miRNA.

The protein localises to the nucleus. Its function is as follows. GTP-binding protein involved in nucleocytoplasmic transport. Required for the import of protein into the nucleus and also for RNA export. This chain is GTP-binding nuclear protein GSP1 (GSP1), found in Encephalitozoon cuniculi (strain GB-M1) (Microsporidian parasite).